Here is a 2476-residue protein sequence, read N- to C-terminus: Transcriptional regulator ATRX (2476 aa).

A Glycyl lysine isopeptide (Lys-Gly) (interchain with G-Cter in SUMO2) cross-link involves residue lysine 10. Positions 24 to 154 (HSSEESEETC…FRSRSKMKAD (131 aa)) are disordered. 2 positions are modified to phosphoserine: serine 25 and serine 34. The segment covering 40–57 (MNQSTDKICGSGLNSDMM) has biased composition (polar residues). The span at 58 to 72 (ENNKEEGASTSEKSR) shows a compositional bias: basic and acidic residues. Phosphotyrosine is present on tyrosine 89. The residue at position 92 (serine 92) is a Phosphoserine. A compositionally biased stretch (basic and acidic residues) spans 98–107 (TDENVNEKAA). Polar residues predominate over residues 108-121 (TENSENDITMQSLP). Phosphoserine is present on serine 111. A compositionally biased stretch (basic and acidic residues) spans 134-154 (NEDKDDFKGPEFRSRSKMKAD). Residues lysine 137 and lysine 141 each participate in a glycyl lysine isopeptide (Lys-Gly) (interchain with G-Cter in SUMO2) cross-link. The 138-residue stretch at 158 to 295 (KRGEDGLHGI…LEQLLQQNKK (138 aa)) folds into the ADD domain. The segment at 169–205 (SCTACGQQVNHFQKDSIYRHPSLKVLICKNCFKYYMS) adopts a GATA-type; atypical zinc-finger fold. Phosphoserine is present on serine 212. The segment at 216–271 (DEQCRWCAEGGNLICCDFCHNAFCKKCILRNLGRKELSTIMDENNQWYCYICQPEP) adopts a PHD-type; atypical zinc-finger fold. Lysine 298 participates in a covalent cross-link: Glycyl lysine isopeptide (Lys-Gly) (interchain with G-Cter in SUMO2). Serine 315 is modified (phosphoserine). 3 disordered regions span residues 427-451 (EKNTKDLKSTDAKSETKLGKGEKSY), 466-507 (SVKA…DLDM), and 525-568 (ESAM…NIKS). A Glycyl lysine isopeptide (Lys-Gly) (interchain with G-Cter in SUMO2) cross-link involves residue lysine 439. Over residues 466–494 (SVKAIDGEEQRAHKSTSGEHKGSGRKDGS) the composition is skewed to basic and acidic residues. Residues 549–559 (ESSSVKLNVSS) show a composition bias toward polar residues. Positions 573-586 (KVRKELFVKLTPVS) match the PxVxL motif motif. Threonine 583 carries the phosphothreonine modification. Disordered regions lie at residues 585 to 877 (VSLS…GGSI) and 893 to 1464 (PGVS…GRKK). Phosphoserine is present on residues serine 586, serine 590, serine 626, serine 663, serine 665, serine 717, and serine 719. Over residues 615 to 630 (SSEKCRPREEISDHEN) the composition is skewed to basic and acidic residues. Residues 732–746 (MGHSSSSDTDINEPQ) show a composition bias toward polar residues. Residues serine 766, serine 801, serine 828, serine 829, serine 854, serine 855, and serine 871 each carry the phosphoserine modification. Over residues 819-849 (SVPEKKEEDSSEDEKQGKKVVDNGGHERAKT) the composition is skewed to basic and acidic residues. The segment covering 899–922 (GAEKPSVKEENVNSPEDKRVSKTK) has biased composition (basic and acidic residues). The segment covering 923–937 (EKTKHLRSRQSRKGK) has biased composition (basic residues). Serine 941 and serine 953 each carry phosphoserine. The span at 943–963 (GTDRFPKKEQSDESSEGEKKQ) shows a compositional bias: basic and acidic residues. Residues 964–973 (SRQRPGTKGK) show a composition bias toward basic residues. The segment covering 974-988 (KAPDLKGETLKREQE) has biased composition (basic and acidic residues). Lysine 984 is covalently cross-linked (Glycyl lysine isopeptide (Lys-Gly) (interchain with G-Cter in SUMO2)). Serine 991, serine 992, serine 993, and serine 1041 each carry phosphoserine. Positions 1031-1061 (DKSCEKKEELSDSVDKLPGKGDSCDSSEDKK) are enriched in basic and acidic residues. Over residues 1062 to 1074 (TRNRVSLREKKRF) the composition is skewed to basic residues. Arginine 1063 carries the citrulline modification. Composition is skewed to basic and acidic residues over residues 1083 to 1096 (KRPECSSSDTEKSL) and 1103 to 1129 (STEKRPKRIDLRERRNSSSKRNTKEVK). Positions 1146–1175 (KQKKQRTSAKKKTGNTKEKKRNSLRATPKR) are enriched in basic residues. The interval 1169 to 1313 (LRATPKRKQV…VNQVNSESDS (145 aa)) is interaction with DAXX. Residues serine 1223, serine 1224, and serine 1232 each carry the phosphoserine modification. Basic and acidic residues predominate over residues 1246-1260 (PENRIAKKMLLEEIK). Over residues 1265–1276 (SDEDGSSDDEPD) the composition is skewed to acidic residues. Residues serine 1309, serine 1311, and serine 1313 each carry the phosphoserine modification. Over residues 1321-1332 (PRYRHRLLRHKL) the composition is skewed to basic residues. A phosphoserine mark is found at serine 1335 and serine 1339. 2 stretches are compositionally biased toward basic and acidic residues: residues 1340–1355 (GEEKPTKPKEHKEAKG) and 1395–1404 (KKAELEENQR). Over residues 1406-1415 (YKQKKKRRRI) the composition is skewed to basic residues. Over residues 1416-1436 (KVQEDSSSENKSHSEEDKKEG) the composition is skewed to basic and acidic residues. The segment covering 1437-1453 (DEEDEEDEDEDEEDEND) has biased composition (acidic residues). Lysine 1473 is covalently cross-linked (Glycyl lysine isopeptide (Lys-Gly) (interchain with G-Cter in SUMO2)). The residue at position 1512 (serine 1512) is a Phosphoserine. Threonine 1514 is modified (phosphothreonine). One can recognise a Helicase ATP-binding domain in the interval 1566–1753 (KTKKSPGSGC…HCMVNFIKEN (188 aa)). 1579-1586 (HCMGLGKT) is a binding site for ATP. Residues 1704-1707 (DEGH) carry the DEGH box motif. 2 positions are modified to phosphoserine: serine 1891 and serine 1898. A disordered region spans residues 1898-1982 (SDSDETSKSL…STSNPSSPAP (85 aa)). A compositionally biased stretch (basic and acidic residues) spans 1902 to 1913 (ETSKSLSSDEKK). A Glycyl lysine isopeptide (Lys-Gly) (interchain with G-Cter in SUMO1); alternate cross-link involves residue lysine 1965. Residue lysine 1965 forms a Glycyl lysine isopeptide (Lys-Gly) (interchain with G-Cter in SUMO2); alternate linkage. A Glycyl lysine isopeptide (Lys-Gly) (interchain with G-Cter in SUMO2) cross-link involves residue lysine 1970. Residues 1971-1982 (TTSTSNPSSPAP) show a composition bias toward low complexity. A phosphoserine mark is found at serine 1975 and serine 1979. Residues 1993–2263 (DAEVLEHSGK…RKAAWAEYEA (271 aa)) form an interaction with MECP2 region. One can recognise a Helicase C-terminal domain in the interval 2008–2188 (EILRMAEEIG…ERHFTMNELT (181 aa)). At serine 2203 the chain carries Phosphoserine. The tract at residues 2445–2476 (SVAGGMQPPPLQRAPPPTVRSKNPGPSPGKSM) is disordered. Pro residues predominate over residues 2451–2462 (QPPPLQRAPPPT). Arginine 2457 and arginine 2464 each carry omega-N-methylarginine.

This sequence belongs to the SNF2/RAD54 helicase family. As to quaternary structure, interacts with DAXX to form the chromatin remodeling complex ATRX:DAXX. Probably binds EZH2. Binds annexin V in a calcium and phosphatidylcholine/phosphatidylserine-dependent manner. Interacts directly with CBX5 via the PxVxL motif. Interacts with RAD50, MRE11 and NBN; indicative for an association with the MRN complex. Interacts with histone MACROH2A1. Interacts with histone H3 peptides methylated at 'Lys-10' with preferences H3K9me3 &gt; H3K9me2 &gt; H3K9me1. Interacts with histone H3 peptides unmethylated at 'Lys-5' (H3K4me0). Interacts with MECP2, SMC1 and SMC3. Interacts with SETDB1, TRIM28 and ZNF274. Citrullinated by PADI4.

Its subcellular location is the nucleus. It is found in the chromosome. It localises to the telomere. The protein localises to the PML body. It carries out the reaction ATP + H2O = ADP + phosphate + H(+). Its function is as follows. Involved in transcriptional regulation and chromatin remodeling. Facilitates DNA replication in multiple cellular environments and is required for efficient replication of a subset of genomic loci. Binds to DNA tandem repeat sequences in both telomeres and euchromatin and in vitro binds DNA quadruplex structures. May help stabilizing G-rich regions into regular chromatin structures by remodeling G4 DNA and incorporating H3.3-containing nucleosomes. Catalytic component of the chromatin remodeling complex ATRX:DAXX which has ATP-dependent DNA translocase activity and catalyzes the replication-independent deposition of histone H3.3 in pericentric DNA repeats outside S-phase and telomeres, and the in vitro remodeling of H3.3-containing nucleosomes. Its heterochromatin targeting is proposed to involve a combinatorial readout of histone H3 modifications (specifically methylation states of H3K9 and H3K4) and association with CBX5. Involved in maintaining telomere structural integrity in embryonic stem cells probably implying recruitment of CBX5 to telomeres. Reports on the involvement in transcriptional regulation of telomeric repeat-containing RNA (TERRA) are conflicting; according is required for its transcriptional repression in embryonic stem cells. Acts as a negative regulator of chromatin incorporation of transcriptionally repressive histone MACROH2A1, particularily at telomeres. Participates in the allele-specific gene expression at the imprinted IGF2/H19 gene locus. On the maternal allele, required for the chromatin occupancy of SMC1 and CTCTF within the H19 imprinting control region (ICR) and involved in esatblishment of histone tails modifications in the ICR. Binds to zinc-finger coding genes with atypical chromatin signatures and regulates its H3K9me3 levels. Forms a complex with ZNF274, TRIM28 and SETDB1 to facilitate the deposition and maintenance of H3K9me3 at the 3' exons of zinc-finger genes. In Mus musculus (Mouse), this protein is Transcriptional regulator ATRX (Atrx).